A 484-amino-acid polypeptide reads, in one-letter code: ATP synthase subunit beta (484 aa).

The disordered stretch occupies residues 104–123 (ERGPIGSKQTMPIHADAPPF). 156–163 (GGAGVGKT) provides a ligand contact to ATP.

The protein belongs to the ATPase alpha/beta chains family. As to quaternary structure, F-type ATPases have 2 components, CF(1) - the catalytic core - and CF(0) - the membrane proton channel. CF(1) has five subunits: alpha(3), beta(3), gamma(1), delta(1), epsilon(1). CF(0) has three main subunits: a(1), b(2) and c(9-12). The alpha and beta chains form an alternating ring which encloses part of the gamma chain. CF(1) is attached to CF(0) by a central stalk formed by the gamma and epsilon chains, while a peripheral stalk is formed by the delta and b chains.

It is found in the cell inner membrane. The enzyme catalyses ATP + H2O + 4 H(+)(in) = ADP + phosphate + 5 H(+)(out). Functionally, produces ATP from ADP in the presence of a proton gradient across the membrane. The catalytic sites are hosted primarily by the beta subunits. This Zymomonas mobilis subsp. mobilis (strain ATCC 31821 / ZM4 / CP4) protein is ATP synthase subunit beta.